The sequence spans 992 residues: Exportin-T (992 aa).

Belongs to the exportin family.

The protein localises to the nucleus. Its subcellular location is the cytoplasm. In terms of biological role, tRNA nucleus export receptor which facilitates tRNA translocation across the nuclear pore complex. Involved in pre-tRNA splicing, probably by affecting the interaction of pre-tRNA with splicing endonuclease. This chain is Exportin-T (LOS1), found in Scheffersomyces stipitis (strain ATCC 58785 / CBS 6054 / NBRC 10063 / NRRL Y-11545) (Yeast).